A 277-amino-acid polypeptide reads, in one-letter code: Tetrahydroxynaphthalene reductase PfmaG (277 aa).

NADP(+)-binding residues include Ile36, Asp82, and Asn109. Residues Ser158, Ser159, and Tyr173 each act as proton donor in the active site. Tyr173, Lys177, Ile206, and Thr208 together coordinate NADP(+). Lys177 acts as the Lowers pKa of active site Tyr in catalysis.

Belongs to the short-chain dehydrogenases/reductases (SDR) family.

The enzyme catalyses scytalone + NADP(+) = naphthalene-1,3,6,8-tetrol + NADPH + H(+). It participates in pigment biosynthesis; melanin biosynthesis. Its function is as follows. Tetrahydroxynaphthalene reductase; part of the gene cluster that mediates the biosynthesis of dihydroxynaphthalene (DHN)-melanin, a bluish-green pigment forming a dark layer in the conidial wall that protects the conidia from UV radiations. The first step of the pathway is the production of the pentaketide 1,3,6,8-tetrahydroxynaphthalene (1,3,6,8-THN or T4HN) by the polyketide synthase PfmaE though condensation of acetyl-CoA with malonyl-CoA. T4HN is not stable and easily oxidizes into the stable form flaviolin. T4HN is also substrate of the hydroxynaphthalene reductase PfmaG to yield scytalone. The scytalone dehydratase PfmaJ then reduces scytalone to 1,3,8-THN. 1,3,8-THN is then substrate of the hydroxynaphthalene reductase PfmaI to yield vermelone. Vermelone is further converted by the multicopper oxidase PfmaD to 1,8-DHN. Finally the laccase PFICI_06862 transforms 1,8-DHN to DHN-melanin. The roles of the 5-oxoprolinase PfmaA and the proline iminopeptidase PfmaB within the cluster have not been elucidated yet. In Pestalotiopsis fici (strain W106-1 / CGMCC3.15140), this protein is Tetrahydroxynaphthalene reductase PfmaG.